Here is a 223-residue protein sequence, read N- to C-terminus: Thiamine-phosphate synthase (223 aa).

Residues 42 to 46 and Asn-83 each bind 4-amino-2-methyl-5-(diphosphooxymethyl)pyrimidine; that span reads QLRDK. Residues Asp-84 and Asp-103 each coordinate Mg(2+). Ser-122 contacts 4-amino-2-methyl-5-(diphosphooxymethyl)pyrimidine. 148 to 150 is a binding site for 2-[(2R,5Z)-2-carboxy-4-methylthiazol-5(2H)-ylidene]ethyl phosphate; the sequence is TPT. Lys-151 is a binding site for 4-amino-2-methyl-5-(diphosphooxymethyl)pyrimidine. 2-[(2R,5Z)-2-carboxy-4-methylthiazol-5(2H)-ylidene]ethyl phosphate is bound at residue Gly-179.

It belongs to the thiamine-phosphate synthase family. It depends on Mg(2+) as a cofactor.

The enzyme catalyses 2-[(2R,5Z)-2-carboxy-4-methylthiazol-5(2H)-ylidene]ethyl phosphate + 4-amino-2-methyl-5-(diphosphooxymethyl)pyrimidine + 2 H(+) = thiamine phosphate + CO2 + diphosphate. It catalyses the reaction 2-(2-carboxy-4-methylthiazol-5-yl)ethyl phosphate + 4-amino-2-methyl-5-(diphosphooxymethyl)pyrimidine + 2 H(+) = thiamine phosphate + CO2 + diphosphate. It carries out the reaction 4-methyl-5-(2-phosphooxyethyl)-thiazole + 4-amino-2-methyl-5-(diphosphooxymethyl)pyrimidine + H(+) = thiamine phosphate + diphosphate. The protein operates within cofactor biosynthesis; thiamine diphosphate biosynthesis; thiamine phosphate from 4-amino-2-methyl-5-diphosphomethylpyrimidine and 4-methyl-5-(2-phosphoethyl)-thiazole: step 1/1. Its function is as follows. Condenses 4-methyl-5-(beta-hydroxyethyl)thiazole monophosphate (THZ-P) and 2-methyl-4-amino-5-hydroxymethyl pyrimidine pyrophosphate (HMP-PP) to form thiamine monophosphate (TMP). This is Thiamine-phosphate synthase from Mycobacterium avium (strain 104).